Reading from the N-terminus, the 113-residue chain is Putative membrane protein insertion efficiency factor (113 aa).

This sequence belongs to the UPF0161 family.

It is found in the cell inner membrane. Its function is as follows. Could be involved in insertion of integral membrane proteins into the membrane. This chain is Putative membrane protein insertion efficiency factor, found in Campylobacter concisus (strain 13826).